The sequence spans 156 residues: Transcription antitermination protein NusB (156 aa).

Belongs to the NusB family.

Involved in transcription antitermination. Required for transcription of ribosomal RNA (rRNA) genes. Binds specifically to the boxA antiterminator sequence of the ribosomal RNA (rrn) operons. This is Transcription antitermination protein NusB from Mycolicibacterium paratuberculosis (strain ATCC BAA-968 / K-10) (Mycobacterium paratuberculosis).